The primary structure comprises 429 residues: MRDALNAGLIEFLKASPTPFHATASLVQRLEAAGYQRLDERDSWATVPGGRYYVTRNDSSIIAIKLGKLSPLLGGIRMVGAHTDSPCLRVKPQPELQRQGFLQLGVEVYGGALLAPWFDRDLSLAGRVTFRRDGKVESQLIDFKLPIAVIPNLAIHLNRTANEGWQINPQTELPPILAQVAGDERVDFRALLTEQLAREHDLNADVVLDYELSFYDTQDAALIGLNGDFIAAARLDNLLSCYAGLQALLNADSDETCVLVCNDHEEVGSCSACGADGPMLEQTLQRLLPDGDDYVRAIQRSLMVSADNAHGVHPNYADKHDGNHGPKLNAGPVIKVNNNQRYATNSETAGFFRHLCMAEEVPVQSFVVRSDMGCGSTIGPITASHLGVRTVDIGLPTFAMHSIRELCGSHDLAHLVKVLTAFYRSRELP.

Histidine 82, histidine 156, and histidine 401 together coordinate Zn(2+).

Belongs to the peptidase M18 family. Zn(2+) is required as a cofactor.

In Pseudomonas entomophila (strain L48), this protein is Probable M18 family aminopeptidase 2.